The chain runs to 85 residues: Protein RnfH (85 aa).

It belongs to the UPF0125 (RnfH) family.

This Cereibacter sphaeroides (strain ATCC 17023 / DSM 158 / JCM 6121 / CCUG 31486 / LMG 2827 / NBRC 12203 / NCIMB 8253 / ATH 2.4.1.) (Rhodobacter sphaeroides) protein is Protein RnfH.